We begin with the raw amino-acid sequence, 275 residues long: 2,3,4,5-tetrahydropyridine-2,6-dicarboxylate N-succinyltransferase (275 aa).

Belongs to the transferase hexapeptide repeat family.

It localises to the cytoplasm. The catalysed reaction is (S)-2,3,4,5-tetrahydrodipicolinate + succinyl-CoA + H2O = (S)-2-succinylamino-6-oxoheptanedioate + CoA. It participates in amino-acid biosynthesis; L-lysine biosynthesis via DAP pathway; LL-2,6-diaminopimelate from (S)-tetrahydrodipicolinate (succinylase route): step 1/3. The protein is 2,3,4,5-tetrahydropyridine-2,6-dicarboxylate N-succinyltransferase of Ralstonia pickettii (strain 12J).